Here is an 802-residue protein sequence, read N- to C-terminus: MNQSQNFHNIDLGHYGAQGSNQSFNNNNNGNNGMMMNQQQMQQHVVPHLHHLQQQQQQPQQQQLRNVPDYSNSPNGTTNGSTMSPNCINTNNNNNNNNNNNNNSNNNNNNNNNASNNLTSNKSSSTNTPQIGQLQASPANLTNSPSAISSPITISNNSSLNSPSTTSSPNLLLNGTSNKRIMISQQTCLVEEKFSKNGVQKNVHVVVKNNPFLLTLSLLDSSLNFHQLTPEVQLVYDSESLKEVDSATVKPLEYKTRANEEGDQLTIELRIKVLSSQLEDMLFRAKVKIVDPRTRKETHGLSVITHPIRVVSKPDQVKKKAKKRKRAPTDSLMDTLNRIEHQQKEQQRLLKKLCYHDKENNIIQLIQQQQQQQQLLNNVTNNINNNNNINNNNNNNNNNNNNNNNNNNNNNNNNNNNNNNNTTSTTTTTTTTTSSCNNNNNNNNENNEHIVKIENTECNNNNNNIINNTENDENINKPILNSKDEFQSAFKEFIGAFKQLQCLDPDGADGAFKINTCANDAQTMCEILEMVKVELKKDENFKDKCGGSSGGACGENNPDNPCSCKVCPYKQKVDHINQSYETYFNMFNPSNSNSVVPQQSQQLQQQQIQQQQQSQQQVQQQQQQQMQQQPQQQQQQPQQQQQNQQQGQQPQQQQQQGQLDYTTYIDPQLQMQQQLQMQQAAQQQYMQQTMDQQQQQQYYMQQYHLQQQQQQQQAQRYLMQQQYMQQQAQQQQQQHQQVAIQQQQQQNQQQNQQQNQQQQNQSPQNQQSLDFQNANNFIDFNSGLGFMNFPNINFGDMGFSAV.

Disordered stretches follow at residues 1-148 (MNQS…PSAI), 154-173 (ISNN…NLLL), 381-446 (NNIN…NNEN), and 636-658 (QPQQ…QQGQ). Low complexity predominate over residues 25 to 63 (NNNNNGNNGMMMNQQQMQQHVVPHLHHLQQQQQQPQQQQ). Over residues 69–88 (DYSNSPNGTTNGSTMSPNCI) the composition is skewed to polar residues. Over residues 89–128 (NTNNNNNNNNNNNNNSNNNNNNNNNASNNLTSNKSSSTNT) the composition is skewed to low complexity. A compositionally biased stretch (polar residues) spans 129-142 (PQIGQLQASPANLT). Residues 381 to 445 (NNINNNNNIN…CNNNNNNNNE (65 aa)) show a composition bias toward low complexity.

Expressed in the prestalk cells that constitute the slug tip (pstA cells) and in prespore cells (at protein level). Not expressed in the band of prestalk cells that lies behind the slug tip (pstO cells). Highly expressed in pstO derived papilla cells during culmination.

It localises to the nucleus. The protein resides in the nucleoplasm. In terms of biological role, essential for normal culmination. May function as a transcriptional regulator. This is Putative transcriptional regulator cudA (cudA) from Dictyostelium discoideum (Social amoeba).